The following is an 829-amino-acid chain: Exocyst complex component SEC10b (829 aa).

Residues 244–266 (RGLEVAVANLQDYCNELENRLLS) adopt a coiled-coil conformation.

Belongs to the SEC10 family. As to quaternary structure, the exocyst complex is composed of SEC3, SEC5, SEC6, SEC8, SEC10, EXO70A1 and EXO84B. Interacts with EXO84B. Binds to EXO70E2. As to expression, expressed in seedlings, roots, leaves and flowers.

It is found in the cytoplasm. The protein localises to the cytosol. Its subcellular location is the secreted. The protein resides in the extracellular exosome. Functionally, component of the exocyst complex involved in the docking of exocytic vesicles with fusion sites on the plasma membrane during regulated or polarized secretion. Involved in polarized cell growth and organ morphogenesis. During cytokinesis, involved in cell plate initiation, cell plate maturation and formation of new primary cell wall. The polypeptide is Exocyst complex component SEC10b (Arabidopsis thaliana (Mouse-ear cress)).